The chain runs to 200 residues: MAKYQTIEAAVRSEFGKGSARRARVAGQIPAVVYGADVESNLHVTIDHRTFAALVRQEGVNAVLELDIEGQKQLTMIKHIDQNVLTFHIDHLDLLAIKRGEKVEVDVPVIVEGEPAPGTMWVQDADTIKVEADVLSIPEEFTVSIEGLELGAQITAADIKLEGDTTLVEDPETLIVNIVLPAVEEEDTEEDEAAEEAATE.

It belongs to the bacterial ribosomal protein bL25 family. CTC subfamily. In terms of assembly, part of the 50S ribosomal subunit; part of the 5S rRNA/L5/L18/L25 subcomplex. Contacts the 5S rRNA. Binds to the 5S rRNA independently of L5 and L18.

Its function is as follows. This is one of the proteins that binds to the 5S RNA in the ribosome where it forms part of the central protuberance. The chain is Large ribosomal subunit protein bL25 from Corynebacterium glutamicum (strain ATCC 13032 / DSM 20300 / JCM 1318 / BCRC 11384 / CCUG 27702 / LMG 3730 / NBRC 12168 / NCIMB 10025 / NRRL B-2784 / 534).